The sequence spans 484 residues: Sperm motility kinase 1 (484 aa).

The Protein kinase domain occupies 8-256 (YEMLETIGQG…VAEVMVHPWI (249 aa)). ATP is bound by residues 14 to 22 (IGQGGCAKV) and K37. D127 serves as the catalytic Proton acceptor. The region spanning 274 to 314 (KPDPAIVKPMGHIGFQAQDIEDSLRQRKFNETMASYCLLKK) is the UBA domain. Over residues 423–434 (IDESTEGHTSAS) the composition is skewed to polar residues. Residues 423-447 (IDESTEGHTSASAEDKPVHSRGWPR) are disordered.

It belongs to the protein kinase superfamily. Tyr protein kinase family. Smok subfamily. In terms of tissue distribution, testis-specific. Expressed in the testis from 22 days postpartum (22 dpp).

The catalysed reaction is L-seryl-[protein] + ATP = O-phospho-L-seryl-[protein] + ADP + H(+). It catalyses the reaction L-threonyl-[protein] + ATP = O-phospho-L-threonyl-[protein] + ADP + H(+). Functionally, may play a role in sperm motility, especially in the regulation of flagellar function. The protein is Sperm motility kinase 1 (Smok1) of Mus musculus (Mouse).